A 480-amino-acid polypeptide reads, in one-letter code: MFRSFASPLALVATSALATNPATTAQHQGSFWIQTFGCQMNKADSERMAGILEAMGYHEAPAELEADLVLYNTCTIRDNAEQKVYSYLGRQARRKRTHPHLKLVVAGCVAQQEGEALLRRIPELDLVMGPQHANRLEALLTQVDNGQQVVATDDNHILEDLTTARRDSTICAWVNVIYGCNERCTYCVVPSVRGKEQSRSPEAIRLEIEGLAARGFREITLLGQNIDAYGRDLPGITPEGRRQNTLTDLLHHIHDVEGIERIRFATSHPRYFTERLIEACFDLPKVCEHFHIPFQSGDNDVLKAMARGYTVERYRRIVNRIRELMPDAAISTDVIVAFPGETDAQFQNTLNLVEEVGFDQVNTAAYSPRPNTPAATWSNQLPEVVKVERLKQLNALVERVALQRNSRYSGKVEQVLAEGINPKKPQQLMGRTRTNRLTFFAAEGPQSCRYSPGDLVDVQINSVRAFSLSGTPCDQTRSRH.

In terms of domain architecture, MTTase N-terminal spans 29-145 (GSFWIQTFGC…LEALLTQVDN (117 aa)). [4Fe-4S] cluster-binding residues include C38, C74, C108, C180, C184, and C187. Positions 166–403 (RDSTICAWVN…NALVERVALQ (238 aa)) constitute a Radical SAM core domain. One can recognise a TRAM domain in the interval 406 to 474 (SRYSGKVEQV…AFSLSGTPCD (69 aa)).

It belongs to the methylthiotransferase family. MiaB subfamily. In terms of assembly, monomer. The cofactor is [4Fe-4S] cluster.

Its subcellular location is the cytoplasm. It catalyses the reaction N(6)-dimethylallyladenosine(37) in tRNA + (sulfur carrier)-SH + AH2 + 2 S-adenosyl-L-methionine = 2-methylsulfanyl-N(6)-dimethylallyladenosine(37) in tRNA + (sulfur carrier)-H + 5'-deoxyadenosine + L-methionine + A + S-adenosyl-L-homocysteine + 2 H(+). Catalyzes the methylthiolation of N6-(dimethylallyl)adenosine (i(6)A), leading to the formation of 2-methylthio-N6-(dimethylallyl)adenosine (ms(2)i(6)A) at position 37 in tRNAs that read codons beginning with uridine. The chain is tRNA-2-methylthio-N(6)-dimethylallyladenosine synthase from Prochlorococcus marinus (strain MIT 9303).